A 280-amino-acid chain; its full sequence is Eukaryotic translation initiation factor 3 subunit F-1 (280 aa).

The 131-residue stretch at 8–138 (VRVHPVVLFQ…LRSYVCIQLG (131 aa)) folds into the MPN domain.

Belongs to the eIF-3 subunit F family. As to quaternary structure, component of the eukaryotic translation initiation factor 3 (eIF-3) complex. The eIF-3 complex interacts with pix.

Its subcellular location is the cytoplasm. In terms of biological role, component of the eukaryotic translation initiation factor 3 (eIF-3) complex, which is involved in protein synthesis of a specialized repertoire of mRNAs and, together with other initiation factors, stimulates binding of mRNA and methionyl-tRNAi to the 40S ribosome. The eIF-3 complex specifically targets and initiates translation of a subset of mRNAs involved in cell proliferation. The sequence is that of Eukaryotic translation initiation factor 3 subunit F-1 from Drosophila persimilis (Fruit fly).